The following is a 1224-amino-acid chain: Coatomer subunit alpha (1224 aa).

4 WD repeats span residues 7-37 (TKSARVKGLSFHPKRPWILTSLHNGVIQLWD), 49-79 (EHDGPVRGIDFHKQQPLFVSGGDDYKIKVWN), 91-121 (GHLDYIRTTFFHHEYPWILSASDDQTIRVWN), and 133-163 (GHNHYVMCAQFHPSEDLVVSASLDQTVRVWD). The residue at position 173 (S173) is a Phosphoserine. Position 185 is a phosphothreonine (T185). 2 WD repeats span residues 203–233 (GHDRGVNWAAFHPTMPLIVSGADDRQVKIWR) and 247–277 (GHYNNVSCAVFHPRQELILSNSEDKSIRVWD). T591 is modified (phosphothreonine). Position 965 is an omega-N-methylarginine (R965). Phosphoserine is present on S1193.

In terms of assembly, oligomeric complex that consists of at least the alpha, beta, beta', gamma, delta, epsilon and zeta subunits. Interacts with SCYL1. Interacts with JAGN1. Interacts with TMEM41B. Interacts with SVEP1. Probably interacts with PEX11A.

It is found in the cytoplasm. Its subcellular location is the golgi apparatus membrane. It localises to the cytoplasmic vesicle. The protein localises to the COPI-coated vesicle membrane. The protein resides in the secreted. The coatomer is a cytosolic protein complex that binds to dilysine motifs and reversibly associates with Golgi non-clathrin-coated vesicles, which further mediate biosynthetic protein transport from the ER, via the Golgi up to the trans Golgi network. Coatomer complex is required for budding from Golgi membranes, and is essential for the retrograde Golgi-to-ER transport of dilysine-tagged proteins. In mammals, the coatomer can only be recruited by membranes associated to ADP-ribosylation factors (ARFs), which are small GTP-binding proteins; the complex also influences the Golgi structural integrity, as well as the processing, activity, and endocytic recycling of LDL receptors. Its function is as follows. Xenin stimulates exocrine pancreatic secretion. It inhibits pentagastrin-stimulated secretion of acid, to induce exocrine pancreatic secretion and to affect small and large intestinal motility. In the gut, xenin interacts with the neurotensin receptor. The sequence is that of Coatomer subunit alpha (COPA) from Bos taurus (Bovine).